The following is a 2488-amino-acid chain: Neuron navigator 2 (2488 aa).

The Calponin-homology (CH) domain maps to 85–192; it reads GFDTQIYTDW…LFFSLSRYKQ (108 aa). Composition is skewed to low complexity over residues 194–204, 221–247, and 255–267; these read QQQPQKQHLSS, QAGTPQQQVPVTPQAPCQPHQPAPHQQ, and QSSASSKDSSQSK. Disordered regions lie at residues 194-675 and 706-727; these read QQQP…GSNT and TEGNVTAESSSTGVSVEPSHFT. Over residues 299–315 the composition is skewed to polar residues; the sequence is GGSTTANNRRSQSFNNY. Positions 356–369 are enriched in low complexity; that stretch reads SGSSSTPTNCSTSS. The segment covering 384-396 has biased composition (polar residues); that stretch reads KSLSVKHSATVSM. Positions 401 to 410 are enriched in pro residues; the sequence is PPGPEAPRPT. Residues 492 to 506 show a composition bias toward polar residues; the sequence is RTFSRALTNKKSSLK. Residues 498–531 are a coiled coil; it reads LTNKKSSLKGNEKEKEKQQREKDKEKSKDLAKRA. Basic and acidic residues predominate over residues 507–547; the sequence is GNEKEKEKQQREKDKEKSKDLAKRASVTERLDLKEEPKEDP. The span at 592–606 shows a compositional bias: low complexity; that stretch reads MKSMPGKSPSAPAPS. Residues 615-626 are compositionally biased toward polar residues; it reads GKLSSGLPQQKP. Composition is skewed to low complexity over residues 633–642 and 657–675; these read SSSSSSLASS and SSQTVSGSVGTTQTTGSNT. A compositionally biased stretch (polar residues) spans 706-719; the sequence is TEGNVTAESSSTGV. The stretch at 743–771 forms a coiled coil; the sequence is EARRLRTVKNIADLRQNLEETMSSLRGTQ. Disordered stretches follow at residues 804–824, 939–1151, 1177–1200, 1213–1283, 1295–1338, 1355–1412, 1440–1460, 1473–1560, and 1591–1629; these read LSWRLGQSSPRLQAGDAPSMG, LGLG…QSGS, KSSALVSRSAGRKSSMDGAQNQDD, YRSL…SDNE, PAAQ…PIAT, MTQQ…TNAS, SLSSGGVPSHNSSTGLIASSK, VKTT…VTSP, and SLSNADGQYDPYTDSRFRNSSMSLDEKSRTMSRSGSFRD. Positions 939-985 are enriched in low complexity; sequence LGLGDADSWDDSSSVSSGISDTIDNLSTDDINTSSSISSYANTPASS. A compositionally biased stretch (basic and acidic residues) spans 1091–1102; the sequence is KTDDAKVSEKGR. Over residues 1130-1142 the composition is skewed to polar residues; that stretch reads PSSSRTPTANANS. Low complexity predominate over residues 1220–1245; sequence SKSNSRNGAGNRSSTSSIDSNISSKS. The span at 1299–1309 shows a compositional bias: polar residues; that stretch reads PVSSPAQTSLQ. 2 stretches are compositionally biased toward low complexity: residues 1363 to 1380 and 1388 to 1404; these read SPSGSGVLSSGSSSPLYS and SPLASSPSSAHSAPSNS. Over residues 1440–1456 the composition is skewed to polar residues; sequence SLSSGGVPSHNSSTGLI. Residues 1477-1489 are compositionally biased toward low complexity; the sequence is LSESPLSSPAASP. 3 positions are modified to phosphoserine: S1480, S1484, and S1488. 2 stretches are compositionally biased toward basic and acidic residues: residues 1498 to 1510 and 1526 to 1535; these read RKQDSDPHLDRNT and TQEDAKEWLR. Positions 1549–1560 are enriched in low complexity; that stretch reads SPFSSGSSVTSP. A coiled-coil region spans residues 1686 to 1773; that stretch reads EEKCQSEIRK…AAAQAAINGV (88 aa). 2 disordered regions span residues 1790–1887 and 1951–1985; these read ADLR…LRNS and AENDRLKSESQGSGCSRAPSQVSISASPRQSMGLS. Composition is skewed to polar residues over residues 1800–1820, 1875–1887, and 1959–1985; these read SDSVSSINSATSHSSVGSNIE, NGSTGSTPLLRNS, and ESQGSGCSRAPSQVSISASPRQSMGLS. The stretch at 1897–1964 forms a coiled coil; it reads MDSEAETVMQ…RLKSESQGSG (68 aa). S1977 carries the post-translational modification Phosphoserine. 2157-2164 provides a ligand contact to ATP; the sequence is GPSGTGKT. The interval 2423–2488 is disordered; it reads DGYSMPREGS…ILDSSLESTL (66 aa). A compositionally biased stretch (low complexity) spans 2460 to 2473; sequence YSSPQSYDSDSNSN.

This sequence belongs to the Nav/unc-53 family. As to expression, highly expressed in the brain, kidney and liver. Also expressed in the thyroid, mammary gland, spinal cord, heart, placenta and lung. Abundantly expressed in colon cancers.

Its subcellular location is the nucleus. The enzyme catalyses ATP + H2O = ADP + phosphate + H(+). Functionally, possesses 3' to 5' helicase activity and exonuclease activity. Involved in neuronal development, specifically in the development of different sensory organs. The chain is Neuron navigator 2 (NAV2) from Homo sapiens (Human).